A 318-amino-acid chain; its full sequence is Porphobilinogen deaminase (318 aa).

C241 bears the S-(dipyrrolylmethanemethyl)cysteine mark.

Belongs to the HMBS family. As to quaternary structure, monomer. Dipyrromethane serves as cofactor.

The enzyme catalyses 4 porphobilinogen + H2O = hydroxymethylbilane + 4 NH4(+). Its pathway is porphyrin-containing compound metabolism; protoporphyrin-IX biosynthesis; coproporphyrinogen-III from 5-aminolevulinate: step 2/4. In terms of biological role, tetrapolymerization of the monopyrrole PBG into the hydroxymethylbilane pre-uroporphyrinogen in several discrete steps. This chain is Porphobilinogen deaminase, found in Geobacter sulfurreducens (strain ATCC 51573 / DSM 12127 / PCA).